Here is a 421-residue protein sequence, read N- to C-terminus: Cytochrome c biogenesis protein Ccs1 (421 aa).

Helical transmembrane passes span 12 to 32 (LRFAISILLIIASCSVIGTVI), 71 to 91 (TWWFLGFIALFGLSLFTCTIL), and 157 to 177 (IAPIIVHFSMILILIGAIFGA).

Belongs to the Ccs1/CcsB family. As to quaternary structure, may interact with CcsA.

Its subcellular location is the plastid. The protein resides in the chloroplast thylakoid membrane. In terms of biological role, required during biogenesis of c-type cytochromes (cytochrome c6 and cytochrome f) at the step of heme attachment. The protein is Cytochrome c biogenesis protein Ccs1 of Trieres chinensis (Marine centric diatom).